The following is a 256-amino-acid chain: Glutamate racemase (256 aa).

Substrate is bound by residues 12 to 13 (DS) and 44 to 45 (YG). The active-site Proton donor/acceptor is Cys75. 76 to 77 (NT) is a binding site for substrate. The active-site Proton donor/acceptor is Cys186. Substrate is bound at residue 187–188 (TH).

Belongs to the aspartate/glutamate racemases family.

It catalyses the reaction L-glutamate = D-glutamate. It functions in the pathway cell wall biogenesis; peptidoglycan biosynthesis. Provides the (R)-glutamate required for cell wall biosynthesis. This chain is Glutamate racemase, found in Clostridium acetobutylicum (strain ATCC 824 / DSM 792 / JCM 1419 / IAM 19013 / LMG 5710 / NBRC 13948 / NRRL B-527 / VKM B-1787 / 2291 / W).